Here is a 155-residue protein sequence, read N- to C-terminus: Ribonuclease H (155 aa).

The RNase H type-1 domain occupies 7-150 (AQNAVDLYTD…ADKLACKGRD (144 aa)). The Mg(2+) site is built by Asp-16, Glu-54, Asp-77, and Asp-142.

It belongs to the RNase H family. Monomer. The cofactor is Mg(2+).

It localises to the cytoplasm. The catalysed reaction is Endonucleolytic cleavage to 5'-phosphomonoester.. Endonuclease that specifically degrades the RNA of RNA-DNA hybrids. In Saccharopolyspora erythraea (strain ATCC 11635 / DSM 40517 / JCM 4748 / NBRC 13426 / NCIMB 8594 / NRRL 2338), this protein is Ribonuclease H.